The sequence spans 411 residues: MTAQTPIHVYSEIGKLKKVLLHRPGKEIENLMPDYLERLLFDDIPFLEDAQKEHDAFAQALRDEGIEVLYLETLAAESLVTPEIREAFIDEYLSEANIRGRATKKAIRELLMAIEDNQELIEKTMAGVQKSELPEIPASEKGLTDLVESSYPFAIDPMPNLYFTRDPFATIGTGVSLNHMFSETRNRETLYGKYIFTHHPIYGGGKVPMVYDRNETTRIEGGDELVLSKDVLAVGISQRTDAASIEKLLVNIFKQNLGFKKVLAFEFANNRKFMHLDTVFTMVDYDKFTIHPEIEGDLRVYSVTYDNEELHIVEEKGDLADLLAANLGVEKVDLIRCGGDNLVAAGREQWNDGSNTLTIAPGVVVVYNRNTITNAILESKGLKLIKIHGSELVRGRGGPRCMSMPFEREDI.

C401 acts as the Amidino-cysteine intermediate in catalysis.

This sequence belongs to the arginine deiminase family. In terms of processing, glycosylated.

The protein localises to the cytoplasm. It carries out the reaction L-arginine + H2O = L-citrulline + NH4(+). Its pathway is amino-acid degradation; L-arginine degradation via ADI pathway; carbamoyl phosphate from L-arginine: step 1/2. This chain is Arginine deiminase, found in Streptococcus pyogenes serotype M3 (strain ATCC BAA-595 / MGAS315).